The chain runs to 162 residues: Dihydrofolate reductase (162 aa).

Positions 3–161 (KITIIAACAE…VAYTFVHYLG (159 aa)) constitute a DHFR domain. 7 to 9 (IAA) is a substrate binding site. NADP(+)-binding positions include 8 to 9 (AA) and 16 to 21 (IGAGNA). Residue Asp-29 coordinates substrate. 45–48 (GRKT) is a binding site for NADP(+). Arg-60 is a substrate binding site. NADP(+) contacts are provided by residues 65 to 68 (ISRQ) and 98 to 103 (MGGAQI). Residue Thr-117 coordinates substrate.

Belongs to the dihydrofolate reductase family.

The catalysed reaction is (6S)-5,6,7,8-tetrahydrofolate + NADP(+) = 7,8-dihydrofolate + NADPH + H(+). It functions in the pathway cofactor biosynthesis; tetrahydrofolate biosynthesis; 5,6,7,8-tetrahydrofolate from 7,8-dihydrofolate: step 1/1. Key enzyme in folate metabolism. Catalyzes an essential reaction for de novo glycine and purine synthesis, and for DNA precursor synthesis. This is Dihydrofolate reductase (folA) from Neisseria gonorrhoeae.